The following is a 189-amino-acid chain: Large ribosomal subunit protein bL9 (189 aa).

This sequence belongs to the bacterial ribosomal protein bL9 family.

In terms of biological role, binds to the 23S rRNA. The polypeptide is Large ribosomal subunit protein bL9 (Cereibacter sphaeroides (strain ATCC 17023 / DSM 158 / JCM 6121 / CCUG 31486 / LMG 2827 / NBRC 12203 / NCIMB 8253 / ATH 2.4.1.) (Rhodobacter sphaeroides)).